Here is a 350-residue protein sequence, read N- to C-terminus: Phosphotriesterase-related protein (350 aa).

H22, H24, E169, H201, H230, and D298 together coordinate a divalent metal cation.

It belongs to the metallo-dependent hydrolases superfamily. Phosphotriesterase family. A divalent metal cation is required as a cofactor.

In Drosophila sechellia (Fruit fly), this protein is Phosphotriesterase-related protein.